Consider the following 95-residue polypeptide: MASETVSNHQEKALALLQADAEKILRLIKVQMDHLTMPQCPLYEEVLDTQMFGLSREVDFAVRLGLIAEEQGKAMLGELERELSALHEAFTNKQQ.

It belongs to the UPF0358 family.

The polypeptide is UPF0358 protein BT9727_3692 (Bacillus thuringiensis subsp. konkukian (strain 97-27)).